We begin with the raw amino-acid sequence, 426 residues long: MAYRAEPPDGGWGWMVVLSAFFQSALVFGVLRSFGVFFVEFVAAFEEPAARVSWIASIGIAVQQFGSPVGSALSTKFGPRPAVMTGGILTALGMLLASFATSLTHLYLSIGLLSGSGWALTFTPTLACLSRYFSRRRSLAMGLALTGVGLSSFAFAPLFQWLLNHYAWRGALLLVSALSLHLVACGALLRPLSLAEDPVVGGPGAQITSLLRHGPFLRYTVALTLINTGYFIPYVHLVAHLRDLGWDPLPAAFLLSVAAISDLVGRVASGWLGDAVPGPVARLLMLWTTLTGVILALYPVAEAPTGLVALTMAYGFTSGALTPVAFSVLPELVGTGKIYCGLGLVQMVESIGGLLGAPLSGYLRDVTGNYTASFVVAGAFLLAGSGVLITLPHFFCFSAPTSKPQDLVTEALDTKVPLPEEGLGED.

At Met1 to Gly10 the chain is on the cytoplasmic side. A run of 12 helical transmembrane segments spans residues Gly11–Leu31, Val52–Ala72, Val83–Leu103, Leu106–Leu126, Leu139–Phe159, Leu172–Leu192, Val221–Leu241, Leu244–Val264, Leu283–Ala303, Gly306–Phe326, Ile338–Pro358, and Phe374–Phe394. At Phe395–Asp426 the chain is on the cytoplasmic side.

Belongs to the major facilitator superfamily. Monocarboxylate porter (TC 2.A.1.13) family.

It localises to the golgi apparatus membrane. It is found in the cell membrane. In terms of biological role, proton-linked monocarboxylate transporter. May catalyze the transport of monocarboxylates across the plasma membrane. This chain is Monocarboxylate transporter 13 (SLC16A13), found in Bos taurus (Bovine).